The chain runs to 1421 residues: Envelopment polyprotein (1421 aa).

Residues Met-1–Gly-20 form the signal peptide. Residues Glu-21–Cys-479 lie on the Lumenal side of the membrane. Residues Ser-22–Ala-31 are compositionally biased toward low complexity. Residues Ser-22–Pro-42 form a disordered region. 2 N-linked (GlcNAc...) asparagine; by host glycosylation sites follow: Asn-97 and Asn-346. Residues Leu-480–Val-500 traverse the membrane as a helical segment. Topologically, residues Tyr-501–Ser-610 are cytoplasmic. The helical transmembrane segment at Trp-611–Thr-631 threads the bilayer. Residues Thr-632–Glu-643 are Lumenal-facing. Asn-639 carries N-linked (GlcNAc...) asparagine; by host glycosylation. A helical membrane pass occupies residues Cys-644–Leu-664. Over Lys-665–Arg-708 the chain is Cytoplasmic. A helical transmembrane segment spans residues Val-709–Ala-729. The propeptide occupies Ala-722–Leu-776. At Gln-730–Ser-1330 the chain is on the lumenal side. Intrachain disulfides connect Cys-901–Cys-1096 and Cys-929–Cys-934. Residues Asn-1081 and Asn-1299 are each glycosylated (N-linked (GlcNAc...) asparagine; by host). A helical membrane pass occupies residues Ile-1331–Tyr-1351. Over Gly-1352 to Val-1421 the chain is Cytoplasmic.

Belongs to the nairovirus envelope glycoprotein family. Heterodimer with glycoprotein C; in prefusion state. As to quaternary structure, heterodimer with glycoprotein N; in prefusion state. Homotrimeric; in postfusion state. Specific enzymatic cleavage by host MBTPS1/S1P/SKI-1 endopeptidase yield glycoprotein N. Specific enzymatic cleavages by host furin-like protease and MBTPS1/S1P endopeptidase yield GP38. Post-translationally, glycosylated.

Its subcellular location is the host endoplasmic reticulum membrane. It localises to the virion membrane. The protein resides in the host Golgi apparatus membrane. In terms of biological role, glycoprotein N and glycoprotein C interact with each other and are present at the surface of the virion. Glycoprotein N probably locks the Gn-Gc complex in a prefusion state. Glycoprotein N and glycoprotein C are able to attach the virion to host cell receptors. This attachment induces virion internalization predominantly through clathrin-dependent endocytosis. Its function is as follows. Glycoprotein C and glycoprotein N interact with each other and are present at the surface of the virion. The spikes at the surface of the virion are formed by an N-terminal extension of glycoprotein C. Glycoprotein N and glycoprotein C are able to attach the virion to host cell receptors. This attachment induces virion internalization predominantly through clathrin-dependent endocytosis. Class II fusion protein that promotes fusion of viral membrane with host endosomal membrane after endocytosis of the virion. Exposure to potassium is necessary for the conformational change leading to fusion. The polypeptide is Envelopment polyprotein (GP) (Ixodes).